Reading from the N-terminus, the 377-residue chain is Mannan endo-1,4-beta-mannosidase A (377 aa).

A signal peptide spans 1 to 18; sequence MKLSHMLLSLASLGVATA. Position 84 (tryptophan 84) interacts with substrate. Asparagine 105 is a glycosylation site (N-linked (GlcNAc...) asparagine). Substrate is bound at residue asparagine 197. Residue glutamate 198 is the Proton donor of the active site. Asparagine 255 carries N-linked (GlcNAc...) asparagine glycosylation. Tyrosine 273 contacts substrate. The active-site Nucleophile is the glutamate 306. The N-linked (GlcNAc...) asparagine glycan is linked to asparagine 326. Tryptophan 336 provides a ligand contact to substrate. Asparagine 357 carries an N-linked (GlcNAc...) asparagine glycan.

It belongs to the glycosyl hydrolase 5 (cellulase A) family.

The protein localises to the secreted. It carries out the reaction Random hydrolysis of (1-&gt;4)-beta-D-mannosidic linkages in mannans, galactomannans and glucomannans.. Functionally, endo-1,4-mannanase, a crucial enzyme for depolymerization of seed galactomannans and wood galactoglucomannans. In Aspergillus aculeatus, this protein is Mannan endo-1,4-beta-mannosidase A (manA).